Consider the following 457-residue polypeptide: Ribosomal protein uS12 methylthiotransferase RimO (457 aa).

The MTTase N-terminal domain maps to lysine 9 to lysine 128. [4Fe-4S] cluster-binding residues include cysteine 18, cysteine 54, cysteine 88, cysteine 163, cysteine 167, and cysteine 170. Residues serine 149 to glutamate 384 enclose the Radical SAM core domain. The TRAM domain occupies serine 387–valine 455.

It belongs to the methylthiotransferase family. RimO subfamily. [4Fe-4S] cluster serves as cofactor.

The protein localises to the cytoplasm. It carries out the reaction L-aspartate(89)-[ribosomal protein uS12]-hydrogen + (sulfur carrier)-SH + AH2 + 2 S-adenosyl-L-methionine = 3-methylsulfanyl-L-aspartate(89)-[ribosomal protein uS12]-hydrogen + (sulfur carrier)-H + 5'-deoxyadenosine + L-methionine + A + S-adenosyl-L-homocysteine + 2 H(+). In terms of biological role, catalyzes the methylthiolation of an aspartic acid residue of ribosomal protein uS12. This is Ribosomal protein uS12 methylthiotransferase RimO from Bdellovibrio bacteriovorus (strain ATCC 15356 / DSM 50701 / NCIMB 9529 / HD100).